A 341-amino-acid polypeptide reads, in one-letter code: Phenylalanine--tRNA ligase alpha subunit (341 aa).

Glu256 is a Mg(2+) binding site.

This sequence belongs to the class-II aminoacyl-tRNA synthetase family. Phe-tRNA synthetase alpha subunit type 1 subfamily. In terms of assembly, tetramer of two alpha and two beta subunits. Mg(2+) serves as cofactor.

The protein localises to the cytoplasm. The enzyme catalyses tRNA(Phe) + L-phenylalanine + ATP = L-phenylalanyl-tRNA(Phe) + AMP + diphosphate + H(+). This Chlamydia muridarum (strain MoPn / Nigg) protein is Phenylalanine--tRNA ligase alpha subunit (pheS).